The following is a 148-amino-acid chain: UPF0756 membrane protein YeaL (148 aa).

4 consecutive transmembrane segments (helical) span residues 14-34, 51-71, 86-106, and 121-141; these read ALGF…LIIV, LSIG…SGTL, LVAI…VTLM, and VLGV…AGLV.

The protein belongs to the UPF0756 family.

It localises to the cell membrane. The chain is UPF0756 membrane protein YeaL from Shigella dysenteriae serotype 1 (strain Sd197).